The primary structure comprises 255 residues: 3-alpha-(or 20-beta)-hydroxysteroid dehydrogenase (255 aa).

10–34 (IITGGARGLGAEAARQAVAAGARVV) provides a ligand contact to NAD(+). Ser-139 contacts substrate. Tyr-152 serves as the catalytic Proton acceptor.

The protein belongs to the short-chain dehydrogenases/reductases (SDR) family. In terms of assembly, homotetramer.

It carries out the reaction androstan-3alpha,17beta-diol + NAD(+) = 17beta-hydroxyandrostanone + NADH + H(+). The protein operates within lipid metabolism; C21-steroid hormone metabolism. The polypeptide is 3-alpha-(or 20-beta)-hydroxysteroid dehydrogenase (Streptomyces exfoliatus (Streptomyces hydrogenans)).